Consider the following 300-residue polypeptide: Probable low-salt glycan biosynthesis reductase Agl14 (300 aa).

Residues 10 to 12, 46 to 47, and 70 to 72 each bind NADH; these read GLL, DI, and AYT. Residues 11–12, 46–47, 70–72, Tyr-109, Tyr-135, and Lys-139 contribute to the NADPH site; these read LL, DI, and AYT. The NADH site is built by Tyr-135 and Lys-139. Tyr-135 serves as the catalytic Proton donor/acceptor.

The protein belongs to the dTDP-4-dehydrorhamnose reductase family.

It participates in protein modification; protein glycosylation. The protein operates within cell surface structure biogenesis; S-layer biogenesis. Its function is as follows. Reductase involved in N-glycan biosynthetic pathway that takes place under low-salt conditions (1.75 M instead of 3.4 M). Participates in the formation of the tetrasaccharide present at 'Asn-532' of S-layer glycoprotein Csg, consisting of a sulfated hexose, 2 hexoses and rhamnose. Involved in the addition of final rhamnose (sugar 4) of the tetrasaccharide on the dolichol phosphate carrier. The chain is Probable low-salt glycan biosynthesis reductase Agl14 (agl14) from Haloferax volcanii (strain ATCC 29605 / DSM 3757 / JCM 8879 / NBRC 14742 / NCIMB 2012 / VKM B-1768 / DS2) (Halobacterium volcanii).